A 460-amino-acid polypeptide reads, in one-letter code: 5-hydroxytryptamine receptor 2C (460 aa).

Residues 1-32 form the signal peptide; the sequence is MVNLGNAVRSLLMHLIGLLVWQFDISISPVAA. The Extracellular segment spans residues 33–56; that stretch reads IVTDTFNSSDGGRLFQFPDGVQNW. A helical transmembrane segment spans residues 57–81; the sequence is PALSIVVIIIMTIGGNILVIMAVSM. The Cytoplasmic portion of the chain corresponds to 82 to 87; it reads EKKLHN. Residues 88–112 traverse the membrane as a helical segment; that stretch reads ATNYFLMSLAIADMLVGLLVMPLSL. Residues 113 to 129 lie on the Extracellular side of the membrane; that stretch reads LAILYDYVWPLPRYLCP. A disulfide bridge links C128 with C208. A helical transmembrane segment spans residues 130 to 152; sequence VWISLDVLFSTASIMHLCAISLD. T140 provides a ligand contact to ergotamine. The DRY motif; important for ligand-induced conformation changes motif lies at 152 to 154; the sequence is DRY. Residues 153–168 lie on the Cytoplasmic side of the membrane; sequence RYVAIRNPIEHSRFNS. Residues 169-190 traverse the membrane as a helical segment; sequence RTKAIMKIAIVWAISIGVSVPI. Topologically, residues 191 to 214 are extracellular; that stretch reads PVIGLRDESKVFVNNTTCVLNDPN. N-linked (GlcNAc...) asparagine glycans are attached at residues N204 and N205. L210 is an ergotamine binding site. Residues 215-237 form a helical membrane-spanning segment; it reads FVLIGSFVAFFIPLTIMVITYFL. At 238–313 the chain is on the cytoplasmic side; that stretch reads TIYVLRRQTL…AINNEKKASK (76 aa). The disordered stretch occupies residues 276–301; it reads EEENAPNPNPDQKPRRKKKEKRPRGT. Basic residues predominate over residues 289 to 299; the sequence is PRRKKKEKRPR. A helical membrane pass occupies residues 314–338; that stretch reads VLGIVFFVFLIMWCPFFITNILSVL. C339 and C343 are disulfide-bonded. Topologically, residues 339-349 are extracellular; it reads CGKACNQKLME. A helical transmembrane segment spans residues 350 to 372; that stretch reads KLLNVFVWIGYVCSGINPLVYTL. Positions 366 to 370 match the NPxxY motif; important for ligand-induced conformation changes and signaling motif; it reads NPLVY. The Cytoplasmic portion of the chain corresponds to 373–460; it reads FNKIYRRAFS…NVVSERISSV (88 aa). The PDZ-binding motif lies at 458-460; sequence SSV.

This sequence belongs to the G-protein coupled receptor 1 family. In terms of assembly, interacts with MPDZ. Interacts with ARRB2. Interacts with MPP3; this interaction stabilizes the receptor at the plasma membrane and prevents the desensitization of the HTR2C receptor-mediated calcium response.

The protein localises to the cell membrane. G-protein coupled receptor for 5-hydroxytryptamine (serotonin). Also functions as a receptor for various drugs and psychoactive substances, including ergot alkaloid derivatives, 1-2,5,-dimethoxy-4-iodophenyl-2-aminopropane (DOI) and lysergic acid diethylamide (LSD). Ligand binding causes a conformation change that triggers signaling via guanine nucleotide-binding proteins (G proteins) and modulates the activity of downstream effectors. HTR2C is coupled to G(q)/G(11) G alpha proteins and activates phospholipase C-beta, releasing diacylglycerol (DAG) and inositol 1,4,5-trisphosphate (IP3) second messengers that modulate the activity of phosphatidylinositol 3-kinase and promote the release of Ca(2+) ions from intracellular stores, respectively. Beta-arrestin family members inhibit signaling via G proteins and mediate activation of alternative signaling pathways. Regulates neuronal activity via the activation of short transient receptor potential calcium channels in the brain, and thereby modulates the activation of pro-opiomelanocortin neurons and the release of CRH that then regulates the release of corticosterone. Plays a role in the regulation of appetite and eating behavior, responses to anxiogenic stimuli and stress. Plays a role in insulin sensitivity and glucose homeostasis. This chain is 5-hydroxytryptamine receptor 2C, found in Rattus norvegicus (Rat).